Reading from the N-terminus, the 301-residue chain is Glycerol-3-phosphate dehydrogenase [NAD(P)+] (301 aa).

NADPH contacts are provided by Trp13, Arg33, and Lys78. Sn-glycerol 3-phosphate is bound by residues Lys78 and Gly106. Residue Ala110 participates in NADPH binding. Sn-glycerol 3-phosphate contacts are provided by Lys161, Asp214, Ser224, Arg225, and Asn226. Lys161 acts as the Proton acceptor in catalysis. Arg225 serves as a coordination point for NADPH. Glu251 lines the NADPH pocket.

This sequence belongs to the NAD-dependent glycerol-3-phosphate dehydrogenase family.

It localises to the cytoplasm. The enzyme catalyses sn-glycerol 3-phosphate + NAD(+) = dihydroxyacetone phosphate + NADH + H(+). The catalysed reaction is sn-glycerol 3-phosphate + NADP(+) = dihydroxyacetone phosphate + NADPH + H(+). It participates in membrane lipid metabolism; glycerophospholipid metabolism. Catalyzes the reduction of the glycolytic intermediate dihydroxyacetone phosphate (DHAP) to sn-glycerol 3-phosphate (G3P), the key precursor for phospholipid synthesis. This is Glycerol-3-phosphate dehydrogenase [NAD(P)+] from Synechococcus sp. (strain RCC307).